The following is a 194-amino-acid chain: ATP-dependent Clp protease proteolytic subunit (194 aa).

Ser-98 acts as the Nucleophile in catalysis. Residue His-123 is part of the active site.

Belongs to the peptidase S14 family. As to quaternary structure, fourteen ClpP subunits assemble into 2 heptameric rings which stack back to back to give a disk-like structure with a central cavity, resembling the structure of eukaryotic proteasomes.

It localises to the cytoplasm. The enzyme catalyses Hydrolysis of proteins to small peptides in the presence of ATP and magnesium. alpha-casein is the usual test substrate. In the absence of ATP, only oligopeptides shorter than five residues are hydrolyzed (such as succinyl-Leu-Tyr-|-NHMec, and Leu-Tyr-Leu-|-Tyr-Trp, in which cleavage of the -Tyr-|-Leu- and -Tyr-|-Trp bonds also occurs).. Its function is as follows. Cleaves peptides in various proteins in a process that requires ATP hydrolysis. Has a chymotrypsin-like activity. Plays a major role in the degradation of misfolded proteins. The sequence is that of ATP-dependent Clp protease proteolytic subunit from Staphylococcus epidermidis (strain ATCC 35984 / DSM 28319 / BCRC 17069 / CCUG 31568 / BM 3577 / RP62A).